Consider the following 545-residue polypeptide: Chaperonin GroEL (545 aa).

ATP contacts are provided by residues 30-33 (TLGP), Lys51, 87-91 (DGTTT), Gly415, and Asp496. Residues 526–545 (PEPKAPAGGMPDMGGMGGMM) form a disordered region. The span at 536 to 545 (PDMGGMGGMM) shows a compositional bias: gly residues.

This sequence belongs to the chaperonin (HSP60) family. In terms of assembly, forms a cylinder of 14 subunits composed of two heptameric rings stacked back-to-back. Interacts with the co-chaperonin GroES.

The protein resides in the cytoplasm. The enzyme catalyses ATP + H2O + a folded polypeptide = ADP + phosphate + an unfolded polypeptide.. Functionally, together with its co-chaperonin GroES, plays an essential role in assisting protein folding. The GroEL-GroES system forms a nano-cage that allows encapsulation of the non-native substrate proteins and provides a physical environment optimized to promote and accelerate protein folding. This is Chaperonin GroEL from Paracoccus denitrificans (strain Pd 1222).